The chain runs to 862 residues: DNA mismatch repair protein MutS (862 aa).

Residue 608–615 (GPNMAGKS) participates in ATP binding.

Belongs to the DNA mismatch repair MutS family.

Its function is as follows. This protein is involved in the repair of mismatches in DNA. It is possible that it carries out the mismatch recognition step. This protein has a weak ATPase activity. The sequence is that of DNA mismatch repair protein MutS from Bacteroides fragilis (strain YCH46).